A 106-amino-acid polypeptide reads, in one-letter code: UPF0145 protein VCM66_A0911 (106 aa).

The protein belongs to the UPF0145 family.

This is UPF0145 protein VCM66_A0911 from Vibrio cholerae serotype O1 (strain M66-2).